The chain runs to 660 residues: Acetyl-coenzyme A synthetase (660 aa).

Residues 197-200 and Thr317 contribute to the CoA site; that span reads RGGK. ATP is bound by residues 397-399, 421-426, Asp512, and Arg528; these read GEP and DTWWQT. Ser536 serves as a coordination point for CoA. Residue Arg539 coordinates ATP. Val550, His552, and Val555 together coordinate Mg(2+). The residue at position 625 (Lys625) is an N6-acetyllysine.

Belongs to the ATP-dependent AMP-binding enzyme family. Mg(2+) serves as cofactor. In terms of processing, acetylated. Deacetylation by the SIR2-homolog deacetylase activates the enzyme.

The enzyme catalyses acetate + ATP + CoA = acetyl-CoA + AMP + diphosphate. Its function is as follows. Catalyzes the conversion of acetate into acetyl-CoA (AcCoA), an essential intermediate at the junction of anabolic and catabolic pathways. AcsA undergoes a two-step reaction. In the first half reaction, AcsA combines acetate with ATP to form acetyl-adenylate (AcAMP) intermediate. In the second half reaction, it can then transfer the acetyl group from AcAMP to the sulfhydryl group of CoA, forming the product AcCoA. The chain is Acetyl-coenzyme A synthetase from Burkholderia lata (strain ATCC 17760 / DSM 23089 / LMG 22485 / NCIMB 9086 / R18194 / 383).